We begin with the raw amino-acid sequence, 461 residues long: Cysteine--tRNA ligase (461 aa).

Residue cysteine 28 participates in Zn(2+) binding. The 'HIGH' region motif lies at 30–40 (ITVYDLCHIGH). The Zn(2+) site is built by cysteine 209, histidine 234, and glutamate 238. The 'KMSKS' region signature appears at 266-270 (KMSKS). Residue lysine 269 coordinates ATP.

Belongs to the class-I aminoacyl-tRNA synthetase family. Monomer. Zn(2+) is required as a cofactor.

It localises to the cytoplasm. It carries out the reaction tRNA(Cys) + L-cysteine + ATP = L-cysteinyl-tRNA(Cys) + AMP + diphosphate. The polypeptide is Cysteine--tRNA ligase (Escherichia coli O157:H7).